A 158-amino-acid polypeptide reads, in one-letter code: Transcriptional regulator MraZ (158 aa).

SpoVT-AbrB domains follow at residues 5–52 (IYET…TFSS) and 91–134 (AVEC…SQAE).

This sequence belongs to the MraZ family. In terms of assembly, forms oligomers.

It localises to the cytoplasm. The protein localises to the nucleoid. This Geobacter sulfurreducens (strain ATCC 51573 / DSM 12127 / PCA) protein is Transcriptional regulator MraZ.